Consider the following 322-residue polypeptide: MNRTLQPDSGASQTAPTAHQARAFAPASVANVAVGFDLLGYPMDQVGDTVTVRRIDTPQVRIAAIRGIAQPLPLQTERNTAGAALLSMHRDLALPFGFELEIDKGIPLSSGMGGSAASCVAALLAANALLDEPLRREHLYRYALDGEAVASGSRHGDNLGPLFLGGLVLCTLERLVPVTVPTAWHSLLVHPDTLLETRRAREVLKEPYLLPDIVTQSANLALVLAGCYHSDAELVRAGLRDVLIEPRRAPLIAGFTAAQQAALQADAMGASISGAGPSVFAWFQTRSAAEAAAPAVRAAFTAAGFDSQAWVTPLTSPGARLL.

107–117 (PLSSGMGGSAA) is a binding site for ATP.

Belongs to the GHMP kinase family. Homoserine kinase subfamily.

The protein localises to the cytoplasm. The enzyme catalyses L-homoserine + ATP = O-phospho-L-homoserine + ADP + H(+). The protein operates within amino-acid biosynthesis; L-threonine biosynthesis; L-threonine from L-aspartate: step 4/5. Catalyzes the ATP-dependent phosphorylation of L-homoserine to L-homoserine phosphate. This chain is Homoserine kinase, found in Xylella fastidiosa (strain M23).